Reading from the N-terminus, the 131-residue chain is MRRMARKAIHSDQAPKAIGPYSQAVQVDAGKMTFLSGQIPLDPATMEMVQGDVVAQAERVMENLKAVLAASGLDFSHVVRCTIFLTDLGDFARVNEVYGRYFTGAPPARATVQVSALPRGSKVEIDAIAVS.

The protein belongs to the RutC family.

This chain is Protein DfrA (dfrA), found in Myxococcus xanthus.